The sequence spans 468 residues: Sorting and assembly machinery component 50 homolog (468 aa).

Residues 1 to 24 (MGTVHARSLDPLPMNGPDFGSHDD) form a disordered region. In terms of domain architecture, POTRA spans 44–124 (VVVQRVHFEG…LDVTFEVTEL (81 aa)).

Belongs to the SAM50/omp85 family. Associates with the mitochondrial contact site and cristae organizing system (MICOS) complex (also known as MINOS or MitOS complex).

The protein resides in the mitochondrion outer membrane. In terms of biological role, may play a role in the maintenance of the structure of mitochondrial cristae. This chain is Sorting and assembly machinery component 50 homolog (samm50), found in Xenopus tropicalis (Western clawed frog).